Reading from the N-terminus, the 156-residue chain is MRSSSKQEELVKAFKALLKEEKFSSQGEIVLALQEQGFENINQSKVSRMLTKFGAVRTRNAKMEMVYCLPAELGVPTTSSPLKNLVLDIDYNDAVVVIHTSPGAAQLIARLLDSLGKSEGILGTIAGDDTIFTTPANGFSVKDLYEAILMLFEQEL.

Belongs to the ArgR family.

Its subcellular location is the cytoplasm. It participates in amino-acid biosynthesis; L-arginine biosynthesis [regulation]. Functionally, regulates arginine biosynthesis genes. This chain is Arginine repressor, found in Enterobacter sp. (strain 638).